A 245-amino-acid polypeptide reads, in one-letter code: Chlorophyll a-b binding protein 1B-21, chloroplastic (245 aa).

Residues 1–44 (MASSSGLRSCSAVGVPSLLAPSSRSGRSGLPFCAYATTSGRVTM) constitute a chloroplast transit peptide. Trp48 contacts chlorophyll b. Chlorophyll a-binding residues include Phe68, Glu87, and His90. Position 92 (Arg92) interacts with chlorophyll b. Residues 93–113 (WAMLCVPGVLVPEALGLGNWV) form a helical membrane-spanning segment. Leu129 contacts chlorophyll a. Residues 132–152 (PVPWGNLPTILAIEFLAIAFA) form a helical membrane-spanning segment. Chlorophyll b-binding residues include Val133, Glu153, and Arg156. Positions 190, 191, 194, 196, 208, and 224 each coordinate chlorophyll a.

It belongs to the light-harvesting chlorophyll a/b-binding (LHC) protein family. As to quaternary structure, the LHC complex consists of chlorophyll a-b binding proteins. It depends on Binds at least 14 chlorophylls (8 Chl-a and 6 Chl-b) and carotenoids such as lutein and neoxanthin. as a cofactor. Photoregulated by reversible phosphorylation of its threonine residues.

The protein resides in the plastid. The protein localises to the chloroplast thylakoid membrane. Its function is as follows. The light-harvesting complex (LHC) functions as a light receptor, it captures and delivers excitation energy to photosystems with which it is closely associated. This is Chlorophyll a-b binding protein 1B-21, chloroplastic (LHC Ib-21) from Hordeum vulgare (Barley).